Reading from the N-terminus, the 360-residue chain is Mitogen-activated protein kinase 1 (360 aa).

Ala-2 is subject to N-acetylalanine. Residues 25–313 form the Protein kinase domain; it reads YTNLSYIGEG…VEQALAHPYL (289 aa). The residue at position 29 (Ser-29) is a Phosphoserine; by SGK1. Residues 31–39 and Lys-54 each bind ATP; that span reads IGEGAYGMV. Asp-149 acts as the Proton acceptor in catalysis. Thr-185 is subject to Phosphothreonine; by MAP2K1 and MAP2K2. The TXY motif lies at 185–187; that stretch reads TEY. Position 187 is a phosphotyrosine; by MAP2K1 and MAP2K2 (Tyr-187). Thr-190 bears the Phosphothreonine; by autocatalysis mark. Phosphoserine occurs at positions 246, 248, and 284.

The protein belongs to the protein kinase superfamily. CMGC Ser/Thr protein kinase family. MAP kinase subfamily. As to quaternary structure, binds both upstream activators and downstream substrates in multimolecular complexes. Interacts with ADAM15, ARHGEF2, ARRB2, DAPK1 (via death domain), HSF4, IER3, IPO7, MKNK2, MORG1, NISCH, PEA15, SGK1, and isoform 1 of NEK2. Interacts (via phosphorylated form) with TPR (via C-terminal region and phosphorylated form); the interaction requires dimerization of MAPK1/ERK2 and increases following EGF stimulation. Interacts with MAP2K1. Interacts with DUSP6. Interacts (phosphorylated form) with CAV2 ('Tyr-19'-phosphorylated form); the interaction, promoted by insulin, leads to nuclear location and MAPK1 activation. MKNK2 isoform 1 binding prevents from dephosphorylation and inactivation. Interacts with DCC. The phosphorylated form interacts with PML. Interacts with STYX. Interacts with CDK2AP2. Interacts with CAVIN4. Interacts with DUSP7; the interaction enhances DUSP7 phosphatase activity. Interacts with GIT1; this interaction is necessary for MAPK1 localization to focal adhesions. Interacts with ZNF263. Interacts with phosphoglycerate kinase PGK1; the interaction is direct, occurs under hypoxic conditions, and promotes interaction between PGK1 and PIN1. Requires Mg(2+) as cofactor. Dually phosphorylated on Thr-185 and Tyr-187, which activates the enzyme. Phosphorylated upon FLT3 and KIT signaling. Phosphorylation on Ser-29 by SGK1 results in its activation by enhancing its interaction with MAP2K1/MEK1 and MAP2K2/MEK2. Phosphorylation at Ser-246 and Ser-248 as well as autophosphorylation at Thr-190 promote nuclear localization. Ligand-activated ALK induces tyrosine phosphorylation. Dephosphorylated by PTPRJ at Tyr-187. Dephosphorylated by DUSP1 and DUSP2 at Thr-185 and Tyr-187. Post-translationally, ISGylated. In terms of processing, ubiquitinated by TRIM15 via 'Lys-63'-linked ubiquitination; leading to activation. Deubiquitinated by CYLD.

The protein localises to the nucleus. It is found in the cytoplasm. Its subcellular location is the cytoskeleton. It localises to the microtubule organizing center. The protein resides in the centrosome. The protein localises to the spindle. It is found in the membrane. Its subcellular location is the caveola. It localises to the cell junction. The protein resides in the focal adhesion. The catalysed reaction is L-seryl-[protein] + ATP = O-phospho-L-seryl-[protein] + ADP + H(+). The enzyme catalyses L-threonyl-[protein] + ATP = O-phospho-L-threonyl-[protein] + ADP + H(+). Phosphorylated by MAP2K1/MEK1 and MAP2K2/MEK2 on Thr-185 and Tyr-187 in response to external stimuli like insulin or NGF. Both phosphorylations are required for activity. This phosphorylation causes dramatic conformational changes, which enable full activation and interaction of MAPK1/ERK2 with its substrates. Phosphorylation on Ser-29 by SGK1 results in its activation by enhancing its interaction with MAP2K1/MEK1 and MAP2K2/MEK2. Dephosphorylated and inactivated by DUSP1, DUSP3, DUSP6 and DUSP9. Inactivated by pyrimidylpyrrole inhibitors. Its function is as follows. Serine/threonine kinase which acts as an essential component of the MAP kinase signal transduction pathway. MAPK1/ERK2 and MAPK3/ERK1 are the 2 MAPKs which play an important role in the MAPK/ERK cascade. They participate also in a signaling cascade initiated by activated KIT and KITLG/SCF. Depending on the cellular context, the MAPK/ERK cascade mediates diverse biological functions such as cell growth, adhesion, survival and differentiation through the regulation of transcription, translation, cytoskeletal rearrangements. The MAPK/ERK cascade also plays a role in initiation and regulation of meiosis, mitosis, and postmitotic functions in differentiated cells by phosphorylating a number of transcription factors. About 160 substrates have already been discovered for ERKs. Many of these substrates are localized in the nucleus, and seem to participate in the regulation of transcription upon stimulation. However, other substrates are found in the cytosol as well as in other cellular organelles, and those are responsible for processes such as translation, mitosis and apoptosis. Moreover, the MAPK/ERK cascade is also involved in the regulation of the endosomal dynamics, including lysosome processing and endosome cycling through the perinuclear recycling compartment (PNRC); as well as in the fragmentation of the Golgi apparatus during mitosis. The substrates include transcription factors (such as ATF2, BCL6, ELK1, ERF, FOS, HSF4 or SPZ1), cytoskeletal elements (such as CANX, CTTN, GJA1, MAP2, MAPT, PXN, SORBS3 or STMN1), regulators of apoptosis (such as BAD, BTG2, CASP9, DAPK1, IER3, MCL1 or PPARG), regulators of translation (such as EIF4EBP1 and FXR1) and a variety of other signaling-related molecules (like ARHGEF2, DCC, FRS2 or GRB10). Protein kinases (such as RAF1, RPS6KA1/RSK1, RPS6KA3/RSK2, RPS6KA2/RSK3, RPS6KA6/RSK4, SYK, MKNK1/MNK1, MKNK2/MNK2, RPS6KA5/MSK1, RPS6KA4/MSK2, MAPKAPK3 or MAPKAPK5) and phosphatases (such as DUSP1, DUSP4, DUSP6 or DUSP16) are other substrates which enable the propagation the MAPK/ERK signal to additional cytosolic and nuclear targets, thereby extending the specificity of the cascade. Mediates phosphorylation of TPR in response to EGF stimulation. May play a role in the spindle assembly checkpoint. Phosphorylates PML and promotes its interaction with PIN1, leading to PML degradation. Phosphorylates CDK2AP2. Phosphorylates phosphoglycerate kinase PGK1 under hypoxic conditions to promote its targeting to the mitochondrion and suppress the formation of acetyl-coenzyme A from pyruvate. Functionally, acts as a transcriptional repressor. Binds to a [GC]AAA[GC] consensus sequence. Repress the expression of interferon gamma-induced genes. Seems to bind to the promoter of CCL5, DMP1, IFIH1, IFITM1, IRF7, IRF9, LAMP3, OAS1, OAS2, OAS3 and STAT1. Transcriptional activity is independent of kinase activity. The chain is Mitogen-activated protein kinase 1 from Bos taurus (Bovine).